A 103-amino-acid chain; its full sequence is Small ribosomal subunit protein uS10 (103 aa).

This sequence belongs to the universal ribosomal protein uS10 family. In terms of assembly, part of the 30S ribosomal subunit.

Functionally, involved in the binding of tRNA to the ribosomes. This is Small ribosomal subunit protein uS10 from Psychrobacter arcticus (strain DSM 17307 / VKM B-2377 / 273-4).